The following is a 1180-amino-acid chain: Chitin synthase 6 (1180 aa).

Transmembrane regions (helical) follow at residues 108–128 and 374–394; these read FTIC…IIAF and LLLA…IAAL. Residue asparagine 737 is glycosylated (N-linked (GlcNAc...) asparagine). 3 helical membrane-spanning segments follow: residues 762 to 782, 795 to 815, and 822 to 842; these read FIVF…VYLV, IPYI…ILFL, and YIGW…FLPI. The region spanning 1118 to 1175 is the DEK-C domain; sequence DPTDEEIKSAVQTYLANQPSLMNVTKRSVREALVAAFPNAELSYKKSMINKAIDDTLS.

Belongs to the chitin synthase family. Class V subfamily.

The protein localises to the cell membrane. It is found in the cytoplasmic vesicle membrane. The enzyme catalyses [(1-&gt;4)-N-acetyl-beta-D-glucosaminyl](n) + UDP-N-acetyl-alpha-D-glucosamine = [(1-&gt;4)-N-acetyl-beta-D-glucosaminyl](n+1) + UDP + H(+). In terms of biological role, polymerizes chitin, a structural polymer of the cell wall and septum, by transferring the sugar moiety of UDP-GlcNAc to the non-reducing end of the growing chitin polymer. Plays a crucial role during infection and allows the fungus to overcome the resistance of the plant that checks growth of the pathogen and eventually eliminates it. This chain is Chitin synthase 6, found in Mycosarcoma maydis (Corn smut fungus).